A 630-amino-acid polypeptide reads, in one-letter code: Polypeptide N-acetylgalactosaminyltransferase 5 (630 aa).

The Cytoplasmic portion of the chain corresponds to 1 to 20; the sequence is MTFSTFTRKMRGRMRSNTCR. Residues 21–38 form a helical; Signal-anchor for type II membrane protein membrane-spanning segment; it reads IVLLTSLVWVIFDFVLIA. Over 39–630 the chain is Lumenal; the sequence is RYSDCIGKDG…MESKFKWQAH (592 aa). N-linked (GlcNAc...) asparagine glycosylation occurs at N166. 5 cysteine pairs are disulfide-bonded: C177–C410, C401–C479, C513–C530, C553–C568, and C594–C611. The interval 186–296 is catalytic subdomain A; the sequence is LPTTSIVIVF…EGWLEPLLAR (111 aa). D227 and R257 together coordinate substrate. Mn(2+) is bound by residues D280 and H282. The segment at 356-418 is catalytic subdomain B; it reads PLRTPTMAGG…PCSHVGHVFR (63 aa). W387 provides a ligand contact to substrate. H415 provides a ligand contact to Mn(2+). Substrate contacts are provided by R418 and Y423. A Ricin B-type lectin domain is found at 500 to 622; sequence YYLGEIRNAE…YGKGQQWLME (123 aa).

Belongs to the glycosyltransferase 2 family. GalNAc-T subfamily. Mn(2+) serves as cofactor. As to expression, expressed during oogenesis, in the somatically derived follicle cells that surround the developing oocyte, which are involved in the maturation of the oocyte and construction of the egg shell, as well as playing a role in subsequent embryonic pattern formation. During embryonic stages 9-11, expressed in the primordium of the foregut, midgut and hindgut. Expressed in salivary glands from embryonic stage 12 onwards. During embryonic stages 12-13, expressed in the posterior midgut and hindgut. During embryonic stages 14-17, expressed in the hindgut and the posterior spiracles. Expression is also detected in the epidermis and antennomaxillary complex at embryonic stages 16-17. In third instar larvae, ubiquitously expressed in wing, eye-antennal, leg and haltere imaginal disks.

It localises to the golgi apparatus membrane. It carries out the reaction L-seryl-[protein] + UDP-N-acetyl-alpha-D-galactosamine = a 3-O-[N-acetyl-alpha-D-galactosaminyl]-L-seryl-[protein] + UDP + H(+). It catalyses the reaction L-threonyl-[protein] + UDP-N-acetyl-alpha-D-galactosamine = a 3-O-[N-acetyl-alpha-D-galactosaminyl]-L-threonyl-[protein] + UDP + H(+). It participates in protein modification; protein glycosylation. In terms of biological role, catalyzes the initial reaction in O-linked oligosaccharide biosynthesis, the transfer of an N-acetyl-D-galactosamine residue to a serine or threonine residue on the protein receptor. It can both act as a peptide transferase that transfers GalNAc onto unmodified peptide substrates, and as a glycopeptide transferase that requires the prior addition of a GalNAc on a peptide before adding additional GalNAc moieties. Prefers EA2 as substrate. In the larval midgut, required for O-glycosylation of apical and luminal proteins within copper cells enabling proper gut acidification. The protein is Polypeptide N-acetylgalactosaminyltransferase 5 of Drosophila melanogaster (Fruit fly).